We begin with the raw amino-acid sequence, 175 residues long: MTTIVSVRRNGQVVVGGDGQVSLGNTVMKGNARKVRRLYNGKVLAGFAGGTADAFTLFELFERKLEMHQGHLLKSAVELAKDWRTDRALRKLEAMLIVADEKESLIITGIGDVVQPEEDQILAIGSGGNYALSAARALVENTELSAHEIVEKSLRIAGDICVFTNTNFTIEELPN.

Thr2 is a catalytic residue. Na(+) contacts are provided by Gly158, Cys161, and Thr164.

The protein belongs to the peptidase T1B family. HslV subfamily. In terms of assembly, a double ring-shaped homohexamer of HslV is capped on each side by a ring-shaped HslU homohexamer. The assembly of the HslU/HslV complex is dependent on binding of ATP.

It is found in the cytoplasm. It carries out the reaction ATP-dependent cleavage of peptide bonds with broad specificity.. With respect to regulation, allosterically activated by HslU binding. Protease subunit of a proteasome-like degradation complex believed to be a general protein degrading machinery. The polypeptide is ATP-dependent protease subunit HslV (Haemophilus influenzae (strain ATCC 51907 / DSM 11121 / KW20 / Rd)).